A 242-amino-acid chain; its full sequence is Aquaporin (242 aa).

Residues 1 to 11 (MNTSTKLICQK) lie on the Cytoplasmic side of the membrane. A helical membrane pass occupies residues 12–32 (LFAEMLCSCIFGFAVYSAILN). Residues 33 to 39 (TKASNSS) are Extracellular-facing. Residues 40-60 (ISSTTVGLTVCFSSISLIYTF) form a helical membrane-spanning segment. The Cytoplasmic segment spans residues 61-83 (CDHSVAHFNPAITIAAICTGKLD). Residues 69 to 71 (NPA) carry the NPA motif. The helical transmembrane segment at 84 to 104 (ILLGIGYVIAQLIGFILATLL) threads the bilayer. Residues 105 to 133 (TVVCFPYGYLKTMEFIASARISDDISTVN) are Extracellular-facing. The chain crosses the membrane as a helical span at residues 134 to 154 (LFFTEFILSFILVFIAFEVGI). Residues 155-175 (NAIREPGVTLFVGIKQIDRSK) are Cytoplasmic-facing. A helical transmembrane segment spans residues 176-196 (FAPLTIGITLGFLAFLASTTS). The Extracellular segment spans residues 197–217 (GGAFNPGIVWGPAIMGGNFDD). Residues 201 to 203 (NPG) carry the NPG motif. The chain crosses the membrane as a helical span at residues 218–238 (FVIYIISELSGGLLGAFIQVF). Topologically, residues 239–242 (LLFK) are cytoplasmic.

Belongs to the MIP/aquaporin (TC 1.A.8) family.

The protein localises to the cell membrane. Its function is as follows. Water channel required to facilitate the transport of water across membranes. Involved in osmotolerance. The protein is Aquaporin (AQP) of Enterocytozoon bieneusi (strain H348) (Microsporidian parasite).